Consider the following 141-residue polypeptide: ATP synthase epsilon chain (141 aa).

This sequence belongs to the ATPase epsilon chain family. F-type ATPases have 2 components, CF(1) - the catalytic core - and CF(0) - the membrane proton channel. CF(1) has five subunits: alpha(3), beta(3), gamma(1), delta(1), epsilon(1). CF(0) has three main subunits: a, b and c.

It localises to the cell membrane. Its function is as follows. Produces ATP from ADP in the presence of a proton gradient across the membrane. This Lactococcus lactis subsp. cremoris (strain MG1363) protein is ATP synthase epsilon chain.